The following is a 340-amino-acid chain: MLYPLIRKGIFALEPETAHNLAIKALHIAGNPWLNRALKALLGCPQGTEKTVMGIKFKNPIGLAAGADKNGEAIDGFGAMGFGFIEVGTVTPLAQDGNAKPRQFRIVEAEGIINRNGFNNYGIDHLIENVNKSHYDGTLGINIGKNKITPIEQGKDDYIFCLNKAYNYAHYITVNISSPNTPDLRTLQYGDALDDLLKSIKERQKILAEQYNKYVPIALKIAPDLTEAELVQIADTVRRHQMDGVIATNTTISRDTVQGMKNAAEIGGLSGKPLQHKSTEIIRRLHRELKGDIPIIGSGGIDGVQNAQEKIAAGAELLQIYSGLIYHGPALVKTLVQTIK.

Residues 65 to 69 (AGADK) and Thr89 contribute to the FMN site. Position 69 (Lys69) interacts with substrate. 114–118 (NRNGF) contributes to the substrate binding site. Residues Asn142 and Asn175 each contribute to the FMN site. Asn175 contributes to the substrate binding site. The active-site Nucleophile is Ser178. Asn180 contacts substrate. FMN contacts are provided by Lys220 and Thr248. 249 to 250 (NT) serves as a coordination point for substrate. Residues Gly271, Gly300, and 321-322 (YS) contribute to the FMN site.

The protein belongs to the dihydroorotate dehydrogenase family. Type 2 subfamily. In terms of assembly, monomer. It depends on FMN as a cofactor.

The protein resides in the cell membrane. The enzyme catalyses (S)-dihydroorotate + a quinone = orotate + a quinol. It functions in the pathway pyrimidine metabolism; UMP biosynthesis via de novo pathway; orotate from (S)-dihydroorotate (quinone route): step 1/1. Its function is as follows. Catalyzes the conversion of dihydroorotate to orotate with quinone as electron acceptor. The sequence is that of Dihydroorotate dehydrogenase (quinone) from Actinobacillus succinogenes (strain ATCC 55618 / DSM 22257 / CCUG 43843 / 130Z).